The primary structure comprises 299 residues: Taste receptor type 2 member 42 (299 aa).

Topologically, residues 1–7 (MATELDK) are extracellular. A helical transmembrane segment spans residues 8–28 (IFLILAIAEFIISMLGNVFIG). Residues 29-50 (LVNCSEGIKNQKVFSSDFILTS) are Cytoplasmic-facing. A helical transmembrane segment spans residues 51 to 71 (LAISTIGQLLVILFDSFLVGL). Residues 72-101 (ASHLYTTYRLGKPVIMLWHMTNHLTTWLAT) lie on the Extracellular side of the membrane. The chain crosses the membrane as a helical span at residues 102–122 (CLSVFYFFKIAHFPHSLFLWL). Residues 123–127 (RWRMN) lie on the Cytoplasmic side of the membrane. Residues 128 to 148 (GMIAMLLILSLFLLIFDSSVL) form a helical membrane-spanning segment. Topologically, residues 149-187 (EIFIDISLNIIDKSSLTLYLDESKTLYDKLSILKTLLSL) are extracellular. The helical transmembrane segment at 188-208 (TSFIPFSLSLTSVLFLYLSLV) threads the bilayer. Residues 209–238 (RHTRNLKLSSLGSRDSSTEAHRRAMKMVMS) are Cytoplasmic-facing. A helical transmembrane segment spans residues 239–259 (FLFLFIVHFFSLQVANWIFFM). At 260–265 (LWNNKY) the chain is on the extracellular side. A helical transmembrane segment spans residues 266–286 (IKFVMLALNAFPSCHSFILIL). Residues 287–299 (GNSKLRQTAVRLL) are Cytoplasmic-facing.

Belongs to the G-protein coupled receptor T2R family.

The protein resides in the membrane. Its function is as follows. Receptor that may play a role in the perception of bitterness and is gustducin-linked. May play a role in sensing the chemical composition of the gastrointestinal content. The activity of this receptor may stimulate alpha gustducin, mediate PLC-beta-2 activation and lead to the gating of TRPM5. The polypeptide is Taste receptor type 2 member 42 (TAS2R42) (Gorilla gorilla gorilla (Western lowland gorilla)).